The primary structure comprises 103 residues: Large ribosomal subunit protein bL21 (103 aa).

It belongs to the bacterial ribosomal protein bL21 family. Part of the 50S ribosomal subunit. Contacts protein L20.

Its function is as follows. This protein binds to 23S rRNA in the presence of protein L20. This Wigglesworthia glossinidia brevipalpis protein is Large ribosomal subunit protein bL21.